Consider the following 280-residue polypeptide: uncharacterized protein (280 aa).

Composition is skewed to basic and acidic residues over residues 110-122 (EKQA…ERLQ), 167-177 (ATGEERAECGR), 223-261 (ARQH…RPQQ), and 269-280 (DVDRSKSCLEAE). Disordered regions lie at residues 110–137 (EKQA…KTEH), 151–177 (HRGE…ECGR), and 219–280 (TIID…LEAE).

This is an uncharacterized protein from Agrobacterium vitis (Rhizobium vitis).